Consider the following 136-residue polypeptide: Histone H3 (136 aa).

Residues 1–43 (MARTKQTARKSTGGKAPRKQLATKAARKSAPASGGVKKPHRYR) form a disordered region. An N6,N6,N6-trimethyllysine; alternate mark is found at Lys5 and Lys10. 2 positions are modified to N6,N6-dimethyllysine; alternate: Lys5 and Lys10. Residues Lys5 and Lys10 each carry the N6-acetyllysine; alternate modification. Residue Lys5 is modified to N6-methyllysine; alternate. Position 11 is a phosphoserine (Ser11). An N6-acetyllysine mark is found at Lys15 and Lys24. At Lys28 the chain carries N6,N6,N6-trimethyllysine; alternate. Lys28 bears the N6,N6-dimethyllysine; alternate mark. At Lys28 the chain carries N6-methyllysine; alternate. Position 29 is a phosphoserine (Ser29). N6,N6,N6-trimethyllysine; alternate is present on Lys37. Lys37 is modified (N6,N6-dimethyllysine; alternate). The residue at position 37 (Lys37) is an N6-methyllysine; alternate. Lys80 carries the post-translational modification N6-methyllysine.

This sequence belongs to the histone H3 family. In terms of assembly, the nucleosome is a histone octamer containing two molecules each of H2A, H2B, H3 and H4 assembled in one H3-H4 heterotetramer and two H2A-H2B heterodimers. The octamer wraps approximately 147 bp of DNA. Interacts (via N-terminal tail mono-acetylated on Lys-15) with swsn-4 (via Bromo domain); the interaction is direct. In terms of processing, phosphorylated at Ser-11 and Ser-29 during M phase. Phosphorylation of Ser-11 requires air-2 but not air-1. Dephosphorylated by gsp-1 and/or gsp-2 during chromosome segregation. Acetylation is generally linked to gene activation. Post-translationally, methylation at Lys-5 is linked to gene activation and is absent from male inactive X chromosome chromatin. Methylation at Lys-10 is linked to gene repression and is enriched in male inactive X chromosome chromatin. Methylation at Lys-37 occurs on the entire length of autosomes during meiotic prophase. Trimethylation at Lys-10 and Lys-37 is specifically antagonized by jmjd-2. Dimethylation and trimethylation at Lys-28 occurs in all nuclei. The mes-2-mes-3-mes-6 complex may be responsible for Lys-28 methylation in most of the germline and in the early embryo.

The protein resides in the nucleus. It localises to the chromosome. In terms of biological role, core component of nucleosome. Nucleosomes wrap and compact DNA into chromatin, limiting DNA accessibility to the cellular machineries which require DNA as a template. Histones thereby play a central role in transcription regulation, DNA repair, DNA replication and chromosomal stability. DNA accessibility is regulated via a complex set of post-translational modifications of histones, also called histone code, and nucleosome remodeling. The protein is Histone H3 (his-2) of Caenorhabditis elegans.